We begin with the raw amino-acid sequence, 1199 residues long: Metabotropic glutamate receptor 1 (1199 aa).

A signal peptide spans 1–20; sequence MVRLLLIFFPMIFLEMSILP. Topologically, residues 21–592 are extracellular; that stretch reads RMPDRKVLLA…IRYLEWSDIE (572 aa). C67 and C109 form a disulfide bridge. Position 74 (Y74) interacts with L-glutamate. N98 carries an N-linked (GlcNAc...) asparagine glycan. L-glutamate-binding positions include S165 and 186 to 188; that span reads SAT. N223 carries an N-linked (GlcNAc...) asparagine glycan. Residue Y236 coordinates L-glutamate. The cysteines at positions 289 and 291 are disulfide-linked. An L-glutamate-binding site is contributed by D318. The cysteines at positions 378 and 394 are disulfide-linked. N-linked (GlcNAc...) asparagine glycosylation occurs at N397. Residue K409 coordinates L-glutamate. C432 and C439 are disulfide-bonded. A glycan (N-linked (GlcNAc...) asparagine) is linked at N515. The chain crosses the membrane as a helical span at residues 593-615; that stretch reads SIIAIAFSCLGILVTLFVTLIFV. Topologically, residues 616–629 are cytoplasmic; that stretch reads LYRDTPVVKSSSRE. A helical membrane pass occupies residues 630–650; the sequence is LCYIILAGIFLGYVCPFTLIA. At 651–658 the chain is on the extracellular side; the sequence is KPTTTSCY. An intrachain disulfide couples C657 to C746. Residues 659–680 form a helical membrane-spanning segment; sequence LQRLLVGLSSAMCYSALVTKTN. Residues 681-703 lie on the Cytoplasmic side of the membrane; sequence RIARILAGSKKKICTRKPRFMSA. Residues 704–727 form a helical membrane-spanning segment; that stretch reads WAQVIIASILISVQLTLVVTLIIM. The Extracellular portion of the chain corresponds to 728-750; it reads EPPMPILSYPSIKEVYLICNTSN. Residue N747 is glycosylated (N-linked (GlcNAc...) asparagine). Residues 751 to 772 form a helical membrane-spanning segment; sequence LGVVAPVGYNGLLIMSCTYYAF. Topologically, residues 773–785 are cytoplasmic; that stretch reads KTRNVPANFNEAK. Residues 786-807 traverse the membrane as a helical segment; sequence YIAFTMYTTCIIWLAFVPIYFG. At 808–815 the chain is on the extracellular side; sequence SNYKIITT. The chain crosses the membrane as a helical span at residues 816-840; the sequence is CFAVSLSVTVALGCMFTPKMYIIIA. At 841–1199 the chain is on the cytoplasmic side; the sequence is KPERNVRSAF…RDYKQSSSTL (359 aa). S853 bears the Phosphoserine mark. Residue T871 is modified to Phosphothreonine. 3 disordered regions span residues 882 to 906, 959 to 1035, and 1055 to 1082; these read GAGNANSNGKSVSWSEPGGRQAPKG, EEDN…QPKS, and HAVLAGPGTPGNGLRSLYPPPPPPQHLQ. Positions 885 to 895 are enriched in polar residues; that stretch reads NANSNGKSVSW. A phosphoserine mark is found at S894 and S969. Pro residues predominate over residues 1012–1032; the sequence is GLPPPLPQQQQQPPPQPPPQQ. Residue S1097 is modified to Phosphoserine. The disordered stretch occupies residues 1118 to 1177; it reads VYEREGNTEEDDLEEEEDLPAASKLTPEDSPALTPPSPFRDSVASGSSVPSSPVSESVLC. The segment covering 1125-1136 has biased composition (acidic residues); that stretch reads TEEDDLEEEEDL. At S1147 the chain carries Phosphoserine. T1151 carries the post-translational modification Phosphothreonine. Position 1154 is a phosphoserine (S1154). Residues 1159 to 1175 show a composition bias toward low complexity; the sequence is SVASGSSVPSSPVSESV.

Belongs to the G-protein coupled receptor 3 family. In terms of assembly, homodimer; disulfide-linked. The PPXXF motif binds HOMER1, HOMER2 and HOMER3. Interacts with TAMALIN. Interacts with RYR1, RYR2, ITPR1, SHANK1 and SHANK3. Interacts with SHIA1. In terms of tissue distribution, expressed in the striatum (at protein level). Expressed in type II unipolar brush cells of the cerebellum (at protein level).

Its subcellular location is the cell membrane. It localises to the postsynaptic cell membrane. The protein localises to the cell projection. The protein resides in the dendrite. G-protein coupled receptor for glutamate. Ligand binding causes a conformation change that triggers signaling via guanine nucleotide-binding proteins (G proteins) and modulates the activity of down-stream effectors. Signaling activates a phosphatidylinositol-calcium second messenger system. May participate in the central action of glutamate in the CNS, such as long-term potentiation in the hippocampus and long-term depression in the cerebellum (By. similarity). May function in the light response in the retina. Induces GRID1 and GRID2 cation-channel activation via GNAQ-PLC-PKC pathway in dopaminergic neurons and cerebellar Purkinje cell, respectively. The sequence is that of Metabotropic glutamate receptor 1 (Grm1) from Mus musculus (Mouse).